The following is a 507-amino-acid chain: Protoheme IX farnesyltransferase, mitochondrial (507 aa).

A compositionally biased stretch (low complexity) spans 72 to 90 (STSASASTTHDSTLSSSPT). The segment at 72 to 136 (STSASASTTH…RGEKPLPPDA (65 aa)) is disordered. Over residues 99–111 (KDHKIAPHRKRQA) the composition is skewed to basic residues. 8 helical membrane-spanning segments follow: residues 166–186 (LTML…VPEM), 199–219 (PLTL…ANAL), 248–268 (AAVL…YFGV), 270–290 (PTVS…YTPL), 298–318 (TWIG…AAAG), 339–359 (IGGW…FMAL), 392–412 (FVFI…WSFA), and 441–461 (GLFW…LLHK).

This sequence belongs to the UbiA prenyltransferase family.

The protein localises to the mitochondrion membrane. The catalysed reaction is heme b + (2E,6E)-farnesyl diphosphate + H2O = Fe(II)-heme o + diphosphate. Converts protoheme IX and farnesyl diphosphate to heme O. The polypeptide is Protoheme IX farnesyltransferase, mitochondrial (COX10) (Gibberella zeae (strain ATCC MYA-4620 / CBS 123657 / FGSC 9075 / NRRL 31084 / PH-1) (Wheat head blight fungus)).